Here is a 400-residue protein sequence, read N- to C-terminus: Acetate kinase (400 aa).

Asn7 contributes to the Mg(2+) binding site. Lys14 is a binding site for ATP. Arg91 serves as a coordination point for substrate. The active-site Proton donor/acceptor is the Asp148. ATP is bound by residues 208–212 (HLGNG), 284–286 (DMR), and 332–336 (GVGEN). Glu384 lines the Mg(2+) pocket.

Belongs to the acetokinase family. As to quaternary structure, homodimer. Mg(2+) is required as a cofactor. Mn(2+) serves as cofactor.

The protein localises to the cytoplasm. The enzyme catalyses acetate + ATP = acetyl phosphate + ADP. The protein operates within metabolic intermediate biosynthesis; acetyl-CoA biosynthesis; acetyl-CoA from acetate: step 1/2. In terms of biological role, catalyzes the formation of acetyl phosphate from acetate and ATP. Can also catalyze the reverse reaction. This chain is Acetate kinase, found in Coprothermobacter proteolyticus (strain ATCC 35245 / DSM 5265 / OCM 4 / BT).